We begin with the raw amino-acid sequence, 403 residues long: Zinc finger CCHC domain-containing protein 3 (403 aa).

Residues 1–158 form a disordered region; it reads MATGGGAEEE…PLQDEPAAAA (158 aa). Composition is skewed to basic and acidic residues over residues 26–38 and 47–65; these read ARGE…REKM and LAEK…REEE. Over residues 67 to 79 the composition is skewed to gly residues; sequence GGGGGSAGLGGPA. Residues 95–121 are compositionally biased toward basic and acidic residues; it reads GDPKGRRRDPAGEAVDPRKKKGAAEAG. Over residues 128–139 the composition is skewed to low complexity; it reads AAAAAMATPARP. A Phosphotyrosine modification is found at Tyr201. 3 CCHC-type zinc fingers span residues 335-350, 352-368, and 372-387; these read CFKC…SCTQ, RCFR…YCRK, and CNLC…QCPK.

Interacts with CGAS. Interacts with RIGI. Interacts with IFIH1/MDA5.

It is found in the cytoplasm. Nucleic acid-binding protein involved in innate immune response to DNA and RNA viruses. Binds DNA and RNA in the cytoplasm and acts by promoting recognition of viral nucleic acids by virus sensors, such as RIGI, IFIH1/MDA5 and CGAS. Acts as a co-sensor for recognition of double-stranded DNA (dsDNA) by cGAS in the cytoplasm, thereby playing a role in innate immune response to cytosolic dsDNA and DNA virus. Binds dsDNA and probably acts by promoting sensing of dsDNA by CGAS, leading to enhance CGAS oligomerization and activation. Promotes sensing of viral RNA by RIGI-like receptors proteins RIGI and IFIH1/MDA5 via two mechanisms: binds double-stranded RNA (dsRNA), enhancing the binding of RIGI and IFIH1/MDA5 to dsRNA and promotes 'Lys-63'-linked ubiquitination and subsequent activation of RIGI and IFIH1/MDA5. The chain is Zinc finger CCHC domain-containing protein 3 from Homo sapiens (Human).